The sequence spans 189 residues: Transcription factor FapR (189 aa).

This sequence belongs to the FapR family.

Functionally, transcriptional factor involved in regulation of membrane lipid biosynthesis by repressing genes involved in fatty acid and phospholipid metabolism. The protein is Transcription factor FapR of Listeria monocytogenes serotype 4a (strain HCC23).